The following is a 149-amino-acid chain: Large ribosomal subunit protein uL13 (149 aa).

This sequence belongs to the universal ribosomal protein uL13 family. In terms of assembly, part of the 50S ribosomal subunit.

This protein is one of the early assembly proteins of the 50S ribosomal subunit, although it is not seen to bind rRNA by itself. It is important during the early stages of 50S assembly. This Bifidobacterium longum subsp. infantis (strain ATCC 15697 / DSM 20088 / JCM 1222 / NCTC 11817 / S12) protein is Large ribosomal subunit protein uL13.